A 209-amino-acid polypeptide reads, in one-letter code: Translation initiation factor 2 subunit beta (209 aa).

The TRAM domain occupies 144–202; sequence TIEEGKEYVVEITEVGSSGEGRTNYKGYTIFVPGAKRGETVKVRIKKVKNDVAIGEIIE.

Belongs to the eIF-2-beta/eIF-5 family. Heterotrimer composed of an alpha, a beta and a gamma chain.

Functionally, eIF-2 functions in the early steps of protein synthesis by forming a ternary complex with GTP and initiator tRNA. The sequence is that of Translation initiation factor 2 subunit beta (eif2b) from Thermoplasma acidophilum (strain ATCC 25905 / DSM 1728 / JCM 9062 / NBRC 15155 / AMRC-C165).